The primary structure comprises 485 residues: Adenosylhomocysteinase (485 aa).

Substrate is bound by residues T64, D139, and E205. NAD(+) is bound at residue 206–208 (TTT). K235 and D239 together coordinate substrate. NAD(+) is bound by residues N240, 269 to 274 (GYGDVG), E292, N327, 348 to 350 (IGH), and N397.

This sequence belongs to the adenosylhomocysteinase family. NAD(+) serves as cofactor.

It carries out the reaction S-adenosyl-L-homocysteine + H2O = L-homocysteine + adenosine. The protein operates within amino-acid biosynthesis; L-homocysteine biosynthesis; L-homocysteine from S-adenosyl-L-homocysteine: step 1/1. Functionally, adenosylhomocysteine is a competitive inhibitor of S-adenosyl-L-methionine-dependent methyl transferase reactions; therefore adenosylhomocysteinase may play a key role in the control of methylations via regulation of the intracellular concentration of adenosylhomocysteine. This is Adenosylhomocysteinase (SAHH) from Nicotiana sylvestris (Wood tobacco).